We begin with the raw amino-acid sequence, 202 residues long: NADH-ubiquinone oxidoreductase chain 6 (202 aa).

5 consecutive transmembrane segments (helical) span residues 1–21, 29–49, 52–72, 96–116, and 156–176; these read MVTM…IMVI, SVFW…LLGV, IALM…LFVI, VPIG…SWLI, and YYLF…AIVL.

The protein belongs to the complex I subunit 6 family.

Its subcellular location is the mitochondrion membrane. It carries out the reaction a ubiquinone + NADH + 5 H(+)(in) = a ubiquinol + NAD(+) + 4 H(+)(out). Functionally, core subunit of the mitochondrial membrane respiratory chain NADH dehydrogenase (Complex I) that is believed to belong to the minimal assembly required for catalysis. Complex I functions in the transfer of electrons from NADH to the respiratory chain. The immediate electron acceptor for the enzyme is believed to be ubiquinone. The sequence is that of NADH-ubiquinone oxidoreductase chain 6 (ND6) from Metridium senile (Brown sea anemone).